The sequence spans 405 residues: Glutamate-pyruvate aminotransferase AlaA (405 aa).

Residues glycine 41 and asparagine 179 each coordinate L-alanine. Lysine 240 is subject to N6-(pyridoxal phosphate)lysine. Arginine 378 contributes to the L-alanine binding site.

Belongs to the class-I pyridoxal-phosphate-dependent aminotransferase family. In terms of assembly, homodimer. The cofactor is pyridoxal 5'-phosphate.

Its subcellular location is the cytoplasm. It carries out the reaction L-alanine + 2-oxoglutarate = pyruvate + L-glutamate. It functions in the pathway amino-acid biosynthesis; L-alanine biosynthesis. Its function is as follows. Involved in the biosynthesis of alanine. Catalyzes the transamination of pyruvate by glutamate, leading to the formation of L-alanine and 2-oxoglutarate. Is also able to catalyze the reverse reaction. This is Glutamate-pyruvate aminotransferase AlaA from Escherichia coli (strain K12).